The chain runs to 605 residues: Aspartate--tRNA(Asp/Asn) ligase (605 aa).

Glutamate 186 serves as a coordination point for L-aspartate. Residues 210 to 213 are aspartate; the sequence is QQFK. L-aspartate is bound by residues arginine 232 and histidine 460. 232-234 serves as a coordination point for ATP; the sequence is RDE. Glutamate 494 provides a ligand contact to ATP. Arginine 501 lines the L-aspartate pocket. 546-549 is a binding site for ATP; it reads GLDR.

This sequence belongs to the class-II aminoacyl-tRNA synthetase family. Type 1 subfamily. Homodimer.

The protein resides in the cytoplasm. The catalysed reaction is tRNA(Asx) + L-aspartate + ATP = L-aspartyl-tRNA(Asx) + AMP + diphosphate. Functionally, aspartyl-tRNA synthetase with relaxed tRNA specificity since it is able to aspartylate not only its cognate tRNA(Asp) but also tRNA(Asn). Reaction proceeds in two steps: L-aspartate is first activated by ATP to form Asp-AMP and then transferred to the acceptor end of tRNA(Asp/Asn). The polypeptide is Aspartate--tRNA(Asp/Asn) ligase (Chlorobium chlorochromatii (strain CaD3)).